A 248-amino-acid polypeptide reads, in one-letter code: Granzyme F (248 aa).

An N-terminal signal peptide occupies residues 1 to 18 (MPPILILLTLLLPLRAGA). Positions 19–20 (EE) are excised as a propeptide. In terms of domain architecture, Peptidase S1 spans 21–246 (IIGGHEVKPH…YLPWISRNMK (226 aa)). Cysteine 50 and cysteine 66 are disulfide-bonded. The active-site Charge relay system is histidine 65. N-linked (GlcNAc...) asparagine glycosylation occurs at asparagine 106. Aspartate 109 serves as the catalytic Charge relay system. 2 cysteine pairs are disulfide-bonded: cysteine 143–cysteine 210 and cysteine 175–cysteine 189. A glycan (N-linked (GlcNAc...) asparagine) is linked at asparagine 154. Serine 204 (charge relay system) is an active-site residue. The N-linked (GlcNAc...) asparagine glycan is linked to asparagine 223.

Belongs to the peptidase S1 family. Granzyme subfamily.

The protein localises to the cytolytic granule. This enzyme is probably necessary for target cell lysis in cell-mediated immune responses. This is Granzyme F (Gzmf) from Mus musculus (Mouse).